The following is a 108-amino-acid chain: MLDKKFHIKKGDTVSVVTGKDKSKTGTVLRILPKRDGVLVEGLNIVKRHTRARGNEPGGIVEKEAPLHVSNVMLYCGKCEKPVRAKKAILEDGKKVRVCVKCGEAFDK.

The protein belongs to the universal ribosomal protein uL24 family. As to quaternary structure, part of the 50S ribosomal subunit.

Functionally, one of two assembly initiator proteins, it binds directly to the 5'-end of the 23S rRNA, where it nucleates assembly of the 50S subunit. In terms of biological role, one of the proteins that surrounds the polypeptide exit tunnel on the outside of the subunit. This chain is Large ribosomal subunit protein uL24, found in Geobacter sulfurreducens (strain ATCC 51573 / DSM 12127 / PCA).